A 318-amino-acid chain; its full sequence is uncharacterized protein (318 aa).

This is an uncharacterized protein from Schizosaccharomyces pombe (strain 972 / ATCC 24843) (Fission yeast).